Reading from the N-terminus, the 72-residue chain is Large ribosomal subunit protein bL28 (72 aa).

Belongs to the bacterial ribosomal protein bL28 family.

The sequence is that of Large ribosomal subunit protein bL28 from Chlorobium phaeobacteroides (strain BS1).